Here is a 359-residue protein sequence, read N- to C-terminus: 3-dehydroquinate synthase (359 aa).

Residues 71-76 (DGEAYK), 105-109 (GVIGD), 129-130 (TT), Lys-142, and Lys-151 each bind NAD(+). Zn(2+) is bound by residues Glu-184, His-247, and His-264.

The protein belongs to the sugar phosphate cyclases superfamily. Dehydroquinate synthase family. The cofactor is Co(2+). Requires Zn(2+) as cofactor. NAD(+) is required as a cofactor.

The protein localises to the cytoplasm. The enzyme catalyses 7-phospho-2-dehydro-3-deoxy-D-arabino-heptonate = 3-dehydroquinate + phosphate. It functions in the pathway metabolic intermediate biosynthesis; chorismate biosynthesis; chorismate from D-erythrose 4-phosphate and phosphoenolpyruvate: step 2/7. In terms of biological role, catalyzes the conversion of 3-deoxy-D-arabino-heptulosonate 7-phosphate (DAHP) to dehydroquinate (DHQ). This Burkholderia vietnamiensis (strain G4 / LMG 22486) (Burkholderia cepacia (strain R1808)) protein is 3-dehydroquinate synthase.